A 513-amino-acid polypeptide reads, in one-letter code: Calcium-dependent protein kinase 24 (513 aa).

Residues M1–V33 are disordered. The region spanning Y47–I305 is the Protein kinase domain. ATP-binding positions include L53–T61 and K76. Residue D171 is the Proton acceptor of the active site. An autoinhibitory domain region spans residues A311 to I341. EF-hand domains lie at E348–E383, L384–L419, E420–D455, and H458–G489. Ca(2+) is bound by residues D361, D363, S365, T367, E372, D397, D399, S401, T403, E408, D433, D435, S437, E444, D467, N469, D471, Q473, and E478.

It belongs to the protein kinase superfamily. Ser/Thr protein kinase family. CDPK subfamily. As to expression, expressed in roots.

It localises to the cytoplasm. The catalysed reaction is L-seryl-[protein] + ATP = O-phospho-L-seryl-[protein] + ADP + H(+). It catalyses the reaction L-threonyl-[protein] + ATP = O-phospho-L-threonyl-[protein] + ADP + H(+). With respect to regulation, activated by calcium. Autophosphorylation may play an important role in the regulation of the kinase activity. In terms of biological role, may play a role in signal transduction pathways that involve calcium as a second messenger. Possesses calcium-dependent protein kinase activity in vitro. The sequence is that of Calcium-dependent protein kinase 24 from Oryza sativa subsp. japonica (Rice).